We begin with the raw amino-acid sequence, 227 residues long: ATP-dependent dethiobiotin synthetase BioD (227 aa).

13–18 (DVGKTV) contributes to the ATP binding site. Threonine 17 contributes to the Mg(2+) binding site. Lysine 38 is an active-site residue. Residues aspartate 55, 116–119 (EGAG), and 176–177 (NR) each bind ATP. Aspartate 55 and glutamate 116 together coordinate Mg(2+).

The protein belongs to the dethiobiotin synthetase family. Homodimer. The cofactor is Mg(2+).

It localises to the cytoplasm. The enzyme catalyses (7R,8S)-7,8-diammoniononanoate + CO2 + ATP = (4R,5S)-dethiobiotin + ADP + phosphate + 3 H(+). The protein operates within cofactor biosynthesis; biotin biosynthesis; biotin from 7,8-diaminononanoate: step 1/2. Catalyzes a mechanistically unusual reaction, the ATP-dependent insertion of CO2 between the N7 and N8 nitrogen atoms of 7,8-diaminopelargonic acid (DAPA, also called 7,8-diammoniononanoate) to form a ureido ring. This Aliivibrio salmonicida (strain LFI1238) (Vibrio salmonicida (strain LFI1238)) protein is ATP-dependent dethiobiotin synthetase BioD.